Reading from the N-terminus, the 81-residue chain is Protein Vpu (81 aa).

Topologically, residues 1-7 (MQSLQVL) are extracellular. A helical transmembrane segment spans residues 8-28 (AIVALVVATIIAIVVWTIVFI). The Cytoplasmic portion of the chain corresponds to 29–81 (EYRKILRQRKIDRLINRITERAEDSGNESDGDQEELSALVERGHLAPWDVDDL). Positions 50–81 (AEDSGNESDGDQEELSALVERGHLAPWDVDDL) are disordered. S53 and S57 each carry phosphoserine; by host CK2. Positions 53 to 63 (SGNESDGDQEE) are enriched in acidic residues.

It belongs to the HIV-1 VPU protein family. As to quaternary structure, homopentamer. Interacts with host CD4 and BRTC; these interactions induce proteasomal degradation of CD4. Interacts with host BST2; this interaction leads to the degradation of host BST2. Interacts with host FBXW11. Interacts with host AP1M1; this interaction plays a role in the mistrafficking and subsequent degradation of host BST2. Interacts with host RANBP2; this interaction allows Vpu to down-regulate host BLM sumoylation. Post-translationally, phosphorylated by host CK2. This phosphorylation is necessary for interaction with human BTRC and degradation of CD4.

The protein localises to the host membrane. With respect to regulation, ion channel activity is inhibited by hexamethylene amiloride in vitro. Functionally, enhances virion budding by targeting host CD4 and Tetherin/BST2 to proteasome degradation. Degradation of CD4 prevents any unwanted premature interactions between viral Env and its host receptor CD4 in the endoplasmic reticulum. Degradation of antiretroviral protein Tetherin/BST2 is important for virion budding, as BST2 tethers new viral particles to the host cell membrane. Mechanistically, Vpu bridges either CD4 or BST2 to BTRC, a substrate recognition subunit of the Skp1/Cullin/F-box protein E3 ubiquitin ligase, induces their ubiquitination and subsequent proteasomal degradation. The alteration of the E3 ligase specificity by Vpu seems to promote the degradation of host IKBKB, leading to NF-kappa-B down-regulation and subsequent apoptosis. Acts as a viroporin that forms an oligomeric ion channel in membranes. Modulates the host DNA repair mechanisms to promote degradation of nuclear viral cDNA in cells that are already productively infected in order to suppress immune sensing and proviral hyper-integration (superinfection). Manipulates PML-NBs and modulates SUMOylation of host BLM protein thereby enhancing its DNA-end processing activity toward viral unintegrated linear DNA. Also inhibits RAD52-mediated homologous repair of viral cDNA, preventing the generation of dead-end circular forms of single copies of the long terminal repeat and permitting sustained nucleolytic attack. The polypeptide is Protein Vpu (Human immunodeficiency virus type 1 group M subtype B (isolate YU-2) (HIV-1)).